The chain runs to 399 residues: Syndecan (399 aa).

The first 28 residues, 1 to 28 (MKPKQKISVEPLLLVAILIGVLVAATHA), serve as a signal peptide directing secretion. The disordered stretch occupies residues 28–319 (AQDQKSVKPS…TKGIDHRPNG (292 aa)). At 29–340 (QDQKSVKPSA…TSSFFSQPGI (312 aa)) the chain is on the extracellular side. Over residues 36 to 46 (PSAAAPSAAAS) the composition is skewed to low complexity. A glycan (O-linked (Xyl...) (glycosaminoglycan) serine) is linked at S62. Over residues 67–77 (GIHEDLEKDPD) the composition is skewed to basic and acidic residues. O-linked (Xyl...) (glycosaminoglycan) serine glycosylation is found at S79, S81, and S110. Positions 99-116 (SHNTRISQSSNSGINTAH) are enriched in polar residues. The segment covering 117-172 (TPTQTSSTIPTTSTSTPMPTTTPTATTPASTTTAAATQISSFANSSSTTTTTLAPT) has biased composition (low complexity). An N-linked (GlcNAc...) asparagine glycan is attached at N160. The segment covering 191–214 (TESSGDGIDADAEDDDEDDGDDKD) has biased composition (acidic residues). S194 is a glycosylation site (O-linked (Xyl...) (glycosaminoglycan) serine). Residues 215-226 (YDYNKELDKEID) show a composition bias toward basic and acidic residues. Acidic residues predominate over residues 253 to 270 (DEIDVDGGDEDDNGDSDI). A compositionally biased stretch (polar residues) spans 299 to 309 (PNTNVNSQPSD). Residues 341–365 (LAAVIGGAVVGLLCAILVVMFIVYR) traverse the membrane as a helical segment. Over 366 to 399 (MRKKDEGSYALDEPKRSPANNSYAKNANNREFYA) the chain is Cytoplasmic. The interval 373 to 399 (SYALDEPKRSPANNSYAKNANNREFYA) is disordered. Polar residues predominate over residues 383–399 (PANNSYAKNANNREFYA).

The protein belongs to the syndecan proteoglycan family. As to expression, in 13-16 hours embryos, expressed in lymph glands, peripheral and central nervous system and basal surfaces of gut epithelia. Sdc and robo are coexpressed in domains adjacent to slit; in tracheal pits and midline glia cells.

The protein localises to the membrane. In terms of biological role, cell surface proteoglycan that bears heparan sulfate. Required for axonal and myotube guidance, is a necessary component of slit/robo signaling and is required in the slit target cells. The sequence is that of Syndecan (Sdc) from Drosophila melanogaster (Fruit fly).